Here is a 509-residue protein sequence, read N- to C-terminus: Glutamyl-tRNA(Gln) amidotransferase subunit A (509 aa).

Active-site charge relay system residues include lysine 75 and serine 150. Serine 174 acts as the Acyl-ester intermediate in catalysis. The segment at 471–509 (DWHKRRPPLGQPPLEQAQGTAQQPKAKSKSTKGSKKSKS) is disordered. Over residues 496 to 509 (AKSKSTKGSKKSKS) the composition is skewed to basic residues.

The protein belongs to the amidase family. GatA subfamily. In terms of assembly, heterotrimer of A, B and C subunits.

It catalyses the reaction L-glutamyl-tRNA(Gln) + L-glutamine + ATP + H2O = L-glutaminyl-tRNA(Gln) + L-glutamate + ADP + phosphate + H(+). Functionally, allows the formation of correctly charged Gln-tRNA(Gln) through the transamidation of misacylated Glu-tRNA(Gln) in organisms which lack glutaminyl-tRNA synthetase. The reaction takes place in the presence of glutamine and ATP through an activated gamma-phospho-Glu-tRNA(Gln). The polypeptide is Glutamyl-tRNA(Gln) amidotransferase subunit A (Synechococcus sp. (strain JA-3-3Ab) (Cyanobacteria bacterium Yellowstone A-Prime)).